A 418-amino-acid polypeptide reads, in one-letter code: D-amino acid dehydrogenase (418 aa).

3 to 17 lines the FAD pocket; the sequence is VLILGSGVVGVATAY.

Belongs to the DadA oxidoreductase family. FAD serves as cofactor.

It catalyses the reaction a D-alpha-amino acid + A + H2O = a 2-oxocarboxylate + AH2 + NH4(+). Its pathway is amino-acid degradation; D-alanine degradation; NH(3) and pyruvate from D-alanine: step 1/1. Functionally, oxidative deamination of D-amino acids. In Granulibacter bethesdensis (strain ATCC BAA-1260 / CGDNIH1), this protein is D-amino acid dehydrogenase.